Consider the following 118-residue polypeptide: Small ribosomal subunit protein uS13 (118 aa).

The disordered stretch occupies residues 93–118 (RSLPVRGQRSKTNARTRKGPRKPIKK).

It belongs to the universal ribosomal protein uS13 family. In terms of assembly, part of the 30S ribosomal subunit. Forms a loose heterodimer with protein S19. Forms two bridges to the 50S subunit in the 70S ribosome.

Located at the top of the head of the 30S subunit, it contacts several helices of the 16S rRNA. In the 70S ribosome it contacts the 23S rRNA (bridge B1a) and protein L5 of the 50S subunit (bridge B1b), connecting the 2 subunits; these bridges are implicated in subunit movement. Contacts the tRNAs in the A and P-sites. The polypeptide is Small ribosomal subunit protein uS13 (Teredinibacter turnerae (strain ATCC 39867 / T7901)).